Consider the following 474-residue polypeptide: Synaptotagmin-17 (474 aa).

The segment at 54–112 (PAQTPPWLVSNRSEDKEGDSDNTTSEPPATPQDTSPDRRRSSSDTSRSTYSLTRRISSL) is disordered. Low complexity predominate over residues 96-112 (SDTSRSTYSLTRRISSL). C2 domains are found at residues 184 to 310 (QLGM…HWWK) and 321 to 455 (ELGE…EQWH).

It belongs to the synaptotagmin family.

It localises to the membrane. Its function is as follows. May play a role in dendrite formation by melanocytes. The chain is Synaptotagmin-17 (syt17) from Xenopus tropicalis (Western clawed frog).